The primary structure comprises 160 residues: Endoribonuclease YbeY (160 aa).

Zn(2+) contacts are provided by His-123, His-127, and His-133.

It belongs to the endoribonuclease YbeY family. It depends on Zn(2+) as a cofactor.

The protein localises to the cytoplasm. Functionally, single strand-specific metallo-endoribonuclease involved in late-stage 70S ribosome quality control and in maturation of the 3' terminus of the 16S rRNA. The polypeptide is Endoribonuclease YbeY (Shouchella clausii (strain KSM-K16) (Alkalihalobacillus clausii)).